The primary structure comprises 54 residues: Large ribosomal subunit protein bL33 (54 aa).

This sequence belongs to the bacterial ribosomal protein bL33 family.

This Opitutus terrae (strain DSM 11246 / JCM 15787 / PB90-1) protein is Large ribosomal subunit protein bL33.